The chain runs to 481 residues: UDP-glucose 6-dehydrogenase 1 (481 aa).

NAD(+) contacts are provided by residues 8-13 (GAGYVG), Asp33, Arg38, 86-90 (VNTPT), 127-128 (ST), and Glu161. Substrate is bound by residues 157–161 (EFLAE), 216–223 (KLAANAFL), and 256–269 (RIGP…VGFG). Cys272 functions as the Nucleophile in the catalytic mechanism. 272 to 275 (CFQK) contacts NAD(+). 334–335 (FK) contacts substrate. Arg342 serves as a coordination point for NAD(+). Arg448 serves as a coordination point for substrate.

Belongs to the UDP-glucose/GDP-mannose dehydrogenase family.

It carries out the reaction UDP-alpha-D-glucose + 2 NAD(+) + H2O = UDP-alpha-D-glucuronate + 2 NADH + 3 H(+). Its pathway is nucleotide-sugar biosynthesis; UDP-alpha-D-glucuronate biosynthesis; UDP-alpha-D-glucuronate from UDP-alpha-D-glucose: step 1/1. With respect to regulation, inhibited by UDP-xylose. Functionally, involved in the biosynthesis of UDP-glucuronic acid (UDP-GlcA), providing nucleotide sugars for cell-wall polymers. This chain is UDP-glucose 6-dehydrogenase 1 (UGD1), found in Arabidopsis thaliana (Mouse-ear cress).